Reading from the N-terminus, the 401-residue chain is Tetracycline resistance protein, class B (401 aa).

Over 1-6 the chain is Cytoplasmic; sequence MNSSTK. A helical membrane pass occupies residues 7–30; the sequence is IALVITLLDAMGIGLIMPVLPTLL. Over 31–42 the chain is Periplasmic; sequence REFIASEDIANH. A helical membrane pass occupies residues 43–61; it reads FGVLLALYALMQVIFAPWL. At 62–71 the chain is on the cytoplasmic side; it reads GKMSDRFGRR. A helical membrane pass occupies residues 72-91; sequence PVLLLSLIGASLDYLLLAFS. Over 92-98 the chain is Periplasmic; the sequence is SALWMLY. A helical membrane pass occupies residues 99-119; the sequence is LGRLLSGITGATGAVAASVIA. Residues 120–129 are Cytoplasmic-facing; sequence DTTSASQRVK. A helical membrane pass occupies residues 130–152; sequence WFGWLGASFGLGLIAGPIIGGFA. Residues 153–158 lie on the Periplasmic side of the membrane; sequence GEISPH. Residues 159-178 traverse the membrane as a helical segment; that stretch reads SPFFIAALLNIVTFLVVMFW. At 179–211 the chain is on the cytoplasmic side; sequence FRETKNTRDNTDTEVGVETQSNSVYITLFKTMP. The helical transmembrane segment at 212 to 232 threads the bilayer; that stretch reads ILLIIYFSAQLIGQIPATVWV. The Periplasmic segment spans residues 233-243; sequence LFTENRFGWNS. A helical membrane pass occupies residues 244–265; it reads MMVGFSLAGLGLLHSVFQAFVA. Residues 266-275 lie on the Cytoplasmic side of the membrane; that stretch reads GRIATKWGEK. The helical transmembrane segment at 276–295 threads the bilayer; the sequence is TAVLLGFIADSSAFAFLAFI. The Periplasmic segment spans residues 296–298; the sequence is SEG. Residues 299–322 form a helical membrane-spanning segment; the sequence is WLVFPVLILLAGGGIALPALQGVM. The Cytoplasmic segment spans residues 323 to 332; the sequence is SIQTKSHQQG. A helical membrane pass occupies residues 333–356; the sequence is ALQGLLVSLTNATGVIGPLLFAVI. At 357 to 365 the chain is on the periplasmic side; sequence YNHSLPIWD. Residues 366 to 387 traverse the membrane as a helical segment; that stretch reads GWIWIIGLAFYCIIILLSMTFM. Topologically, residues 388–401 are cytoplasmic; sequence LTPQAQGSKQETSA.

The protein belongs to the major facilitator superfamily. TCR/Tet family.

It localises to the cell inner membrane. In terms of biological role, resistance to tetracycline by an active tetracycline efflux. This is an energy-dependent process that decreases the accumulation of the antibiotic in whole cells. This protein functions as a metal-tetracycline/H(+) antiporter. This chain is Tetracycline resistance protein, class B (tetA), found in Escherichia coli.